The chain runs to 77 residues: Exodeoxyribonuclease 7 small subunit (77 aa).

This sequence belongs to the XseB family. In terms of assembly, heterooligomer composed of large and small subunits.

It is found in the cytoplasm. It carries out the reaction Exonucleolytic cleavage in either 5'- to 3'- or 3'- to 5'-direction to yield nucleoside 5'-phosphates.. Its function is as follows. Bidirectionally degrades single-stranded DNA into large acid-insoluble oligonucleotides, which are then degraded further into small acid-soluble oligonucleotides. In Lysinibacillus sphaericus (strain C3-41), this protein is Exodeoxyribonuclease 7 small subunit.